The primary structure comprises 366 residues: MAAANRTLMVMAGGTGGHVYPALAVAETLRERGWSVFWLGTRAGLEARVVPAAGIDMVWVSMGGVRGKGLVKKLLLPAMLLVAFAQSLGAILRRRPDVVLGMGGYTAFPGGMMASLLNRPLVVHEQNSVGGLTNRLLACLADRVLTAFPAVFTHAHDKPIPCRRVSAEWVGNPVRGDITAAPAGERAARSGPLRLLVVGGSLGASALNELVPRALALLPEAQRPRVVHQSGRRHVDALRAGYAAAAVDAEVRDYIDDMAAAYRDCDFAICRAGAMTVAELACAGVPALLVPFPFAVDDHQTGNAAFLAEAGAAWLVQQKDLSAEALAELIAGIDRNRLAAMSEQAVRLAKPDATGRVADICEALAK.

Residues 15 to 17 (TGG), Asn-127, Arg-175, Ser-201, Ile-255, and Gln-300 contribute to the UDP-N-acetyl-alpha-D-glucosamine site.

This sequence belongs to the glycosyltransferase 28 family. MurG subfamily.

It localises to the cell inner membrane. The enzyme catalyses di-trans,octa-cis-undecaprenyl diphospho-N-acetyl-alpha-D-muramoyl-L-alanyl-D-glutamyl-meso-2,6-diaminopimeloyl-D-alanyl-D-alanine + UDP-N-acetyl-alpha-D-glucosamine = di-trans,octa-cis-undecaprenyl diphospho-[N-acetyl-alpha-D-glucosaminyl-(1-&gt;4)]-N-acetyl-alpha-D-muramoyl-L-alanyl-D-glutamyl-meso-2,6-diaminopimeloyl-D-alanyl-D-alanine + UDP + H(+). Its pathway is cell wall biogenesis; peptidoglycan biosynthesis. Its function is as follows. Cell wall formation. Catalyzes the transfer of a GlcNAc subunit on undecaprenyl-pyrophosphoryl-MurNAc-pentapeptide (lipid intermediate I) to form undecaprenyl-pyrophosphoryl-MurNAc-(pentapeptide)GlcNAc (lipid intermediate II). The protein is UDP-N-acetylglucosamine--N-acetylmuramyl-(pentapeptide) pyrophosphoryl-undecaprenol N-acetylglucosamine transferase of Thiobacillus denitrificans (strain ATCC 25259 / T1).